Consider the following 248-residue polypeptide: MALLEICCYSMECALTAQRNGADRIELCAAPKEGGLTPSFGVLRSVREHITIPVHPIIRPRGGDFYYTDGEFAAMLEDIRLVRELGFPGLVTGVLTVDGDVDMSRMEKIMAAAGPLAVTFHRAFDMCANPFNALKNLADAGVARVLTSGQKADAAQGLSIIMELIAQGDAPTIMAGAGVRANNLQNFLDAGVREVHSSAGVLLPSPMRYRNQGLSMSADIQADEYSRYRVEGAAVAEMKGIIVRHQAK.

It belongs to the CutC family. In terms of assembly, homodimer.

It is found in the cytoplasm. The polypeptide is PF03932 family protein CutC (Salmonella typhimurium (strain LT2 / SGSC1412 / ATCC 700720)).